Here is a 216-residue protein sequence, read N- to C-terminus: N-(5'-phosphoribosyl)anthranilate isomerase (216 aa).

It belongs to the TrpF family.

It carries out the reaction N-(5-phospho-beta-D-ribosyl)anthranilate = 1-(2-carboxyphenylamino)-1-deoxy-D-ribulose 5-phosphate. The protein operates within amino-acid biosynthesis; L-tryptophan biosynthesis; L-tryptophan from chorismate: step 3/5. The polypeptide is N-(5'-phosphoribosyl)anthranilate isomerase (Leptospira borgpetersenii serovar Hardjo-bovis (strain JB197)).